The following is a 161-amino-acid chain: Small heat shock protein hspJ (161 aa).

The 110-residue stretch at 52 to 161 (SKFTSLNPKL…FEKEIKINIE (110 aa)) folds into the sHSP domain.

Belongs to the small heat shock protein (HSP20) family.

This chain is Small heat shock protein hspJ (hspJ), found in Dictyostelium discoideum (Social amoeba).